A 320-amino-acid polypeptide reads, in one-letter code: MARPKIALIGAGQIGGTLAHLAALKELGDVVLFDIAEGIPEGKALDIAESGPSAKFDARMSGTQSYADIAGADVCIVTAGVARKPGMSRDDLLGINLKVMKSVGEGIAAHAPNAFVICITNPLDAMVWALREFSGLPHEKVCGMAGVLDSARFRHFLADEFDVSMKDVTAFVLGGHGDTMVPLVRYSTVAGIPLPDLVKMGWTTQDKLDAIVQRTRDGGAEIVGLLKTGSAFYAPATSAIEMAESYLKDQKRVLPCAAYVDGAYGLKGFYVGVPTVIGAGGVERVVEISMNKDEQAMFDNSVNAVKGLVAACKGIDDSLS.

NAD(+)-binding positions include 10 to 15 (GAGQIG) and Asp-34. Positions 83 and 89 each coordinate substrate. NAD(+)-binding positions include Asn-96 and 119–121 (ITN). Substrate is bound by residues Asn-121 and Arg-152. His-176 functions as the Proton acceptor in the catalytic mechanism.

The protein belongs to the LDH/MDH superfamily. MDH type 3 family.

The catalysed reaction is (S)-malate + NAD(+) = oxaloacetate + NADH + H(+). Catalyzes the reversible oxidation of malate to oxaloacetate. The protein is Malate dehydrogenase of Roseobacter denitrificans (strain ATCC 33942 / OCh 114) (Erythrobacter sp. (strain OCh 114)).